The following is a 120-amino-acid chain: uncharacterized protein (120 aa).

Residues 63–83 (IDMSCVICFNFSCHLFVVIFI) form a helical membrane-spanning segment.

The protein resides in the membrane. This is an uncharacterized protein from Saccharomyces cerevisiae (strain ATCC 204508 / S288c) (Baker's yeast).